The chain runs to 296 residues: Cytidine deaminase (296 aa).

2 CMP/dCMP-type deaminase domains span residues 47-167 and 186-296; these read TEAE…FGPK and DSSD…VDPV. 88-90 lines the substrate pocket; the sequence is NLE. Zn(2+) is bound at residue His-101. Catalysis depends on Glu-103, which acts as the Proton donor. Zn(2+) is bound by residues Cys-128 and Cys-131.

This sequence belongs to the cytidine and deoxycytidylate deaminase family. In terms of assembly, homodimer. Requires Zn(2+) as cofactor.

The catalysed reaction is cytidine + H2O + H(+) = uridine + NH4(+). The enzyme catalyses 2'-deoxycytidine + H2O + H(+) = 2'-deoxyuridine + NH4(+). Functionally, this enzyme scavenges exogenous and endogenous cytidine and 2'-deoxycytidine for UMP synthesis. This chain is Cytidine deaminase, found in Shewanella sp. (strain MR-4).